The following is a 99-amino-acid chain: uncharacterized protein (99 aa).

Disordered stretches follow at residues 1–24 (MKATRRTRVASERGVRRRRRVRAT) and 49–99 (SVRT…RCAT). Basic residues-rich tracts occupy residues 15–24 (VRRRRRVRAT) and 71–81 (SRRRGRPRSSR).

This is an uncharacterized protein from Streptomyces fradiae (Streptomyces roseoflavus).